The sequence spans 110 residues: UPF0122 protein BCAH187_A3894 (110 aa).

This sequence belongs to the UPF0122 family.

Its function is as follows. Might take part in the signal recognition particle (SRP) pathway. This is inferred from the conservation of its genetic proximity to ftsY/ffh. May be a regulatory protein. In Bacillus cereus (strain AH187), this protein is UPF0122 protein BCAH187_A3894.